The following is a 766-amino-acid chain: Lanosterol synthase ERG7 (766 aa).

The interval 1–47 is disordered; the sequence is MVANSTGRDASALKSRKRAADSESEPLLKQGQPFPKQPRIGSELDKT. One copy of the PFTB 1 repeat lies at 148–190; the sequence is ATAIYNYISARAHPEDGGWGLHIEGESSVFGTLMNYVALRLVG. Asp-482 (proton donor) is an active-site residue. PFTB repeat units follow at residues 586–626 and 635–676; these read IRTA…KHIG and SRRG…VVQT.

The protein belongs to the terpene cyclase/mutase family.

It is found in the lipid droplet. Its subcellular location is the endoplasmic reticulum membrane. It catalyses the reaction (S)-2,3-epoxysqualene = lanosterol. The protein operates within terpene metabolism; lanosterol biosynthesis; lanosterol from farnesyl diphosphate: step 3/3. It participates in steroid metabolism; ergosterol biosynthesis. Its function is as follows. Lanosterol synthase; part of the third module of ergosterol biosynthesis pathway that includes the late steps of the pathway. ERG7 catalyzes the cyclization of (S)-2,3 oxidosqualene to lanosterol, a reaction that forms the sterol core. The third module or late pathway involves the ergosterol synthesis itself through consecutive reactions that mainly occur in the endoplasmic reticulum (ER) membrane. Firstly, the squalene synthase ERG9 catalyzes the condensation of 2 farnesyl pyrophosphate moieties to form squalene, which is the precursor of all steroids. Squalene synthase is crucial for balancing the incorporation of farnesyl diphosphate (FPP) into sterol and nonsterol isoprene synthesis. Secondly, squalene is converted into lanosterol by the consecutive action of the squalene epoxidase ERG1 and the lanosterol synthase ERG7. Then, the delta(24)-sterol C-methyltransferase ERG6 methylates lanosterol at C-24 to produce eburicol. Eburicol is the substrate of the sterol 14-alpha demethylase encoded by CYP51A, CYP51B and CYP51C, to yield 4,4,24-trimethyl ergosta-8,14,24(28)-trienol. CYP51B encodes the enzyme primarily responsible for sterol 14-alpha-demethylation, and plays an essential role in ascospore formation. CYP51A encodes an additional sterol 14-alpha-demethylase, induced on ergosterol depletion and responsible for the intrinsic variation in azole sensitivity. The third CYP51 isoform, CYP51C, does not encode a sterol 14-alpha-demethylase, but is required for full virulence on host wheat ears. The C-14 reductase ERG24 then reduces the C14=C15 double bond which leads to 4,4-dimethylfecosterol. A sequence of further demethylations at C-4, involving the C-4 demethylation complex containing the C-4 methylsterol oxidases ERG25, the sterol-4-alpha-carboxylate 3-dehydrogenase ERG26 and the 3-keto-steroid reductase ERG27, leads to the production of fecosterol via 4-methylfecosterol. ERG28 has a role as a scaffold to help anchor ERG25, ERG26 and ERG27 to the endoplasmic reticulum. The C-8 sterol isomerase ERG2 then catalyzes the reaction which results in unsaturation at C-7 in the B ring of sterols and thus converts fecosterol to episterol. The sterol-C5-desaturases ERG3A and ERG3BB then catalyze the introduction of a C-5 double bond in the B ring to produce 5-dehydroepisterol. The C-22 sterol desaturases ERG5A and ERG5B further convert 5-dehydroepisterol into ergosta-5,7,22,24(28)-tetraen-3beta-ol by forming the C-22(23) double bond in the sterol side chain. Finally, ergosta-5,7,22,24(28)-tetraen-3beta-ol is substrate of the C-24(28) sterol reductase ERG4 to produce ergosterol. The sequence is that of Lanosterol synthase ERG7 from Gibberella zeae (strain ATCC MYA-4620 / CBS 123657 / FGSC 9075 / NRRL 31084 / PH-1) (Wheat head blight fungus).